Consider the following 361-residue polypeptide: D-alanine--D-alanine ligase (361 aa).

In terms of domain architecture, ATP-grasp spans 144 to 350; the sequence is KLAAADAGLA…FMELTDRLIR (207 aa). An ATP-binding site is contributed by 177-232; that stretch reads VASLSFPMFVKPVSLGSSVGITKVNSESELAEAITHACSLDSKVLIEQAVKGREVE. Mg(2+) is bound by residues Asp303, Glu317, and Asn319.

Belongs to the D-alanine--D-alanine ligase family. It depends on Mg(2+) as a cofactor. Requires Mn(2+) as cofactor.

The protein localises to the cytoplasm. It catalyses the reaction 2 D-alanine + ATP = D-alanyl-D-alanine + ADP + phosphate + H(+). It functions in the pathway cell wall biogenesis; peptidoglycan biosynthesis. Functionally, cell wall formation. The chain is D-alanine--D-alanine ligase from Chlorobium luteolum (strain DSM 273 / BCRC 81028 / 2530) (Pelodictyon luteolum).